Here is a 118-residue protein sequence, read N- to C-terminus: Large ribosomal subunit protein bL20 (118 aa).

The protein belongs to the bacterial ribosomal protein bL20 family.

Its function is as follows. Binds directly to 23S ribosomal RNA and is necessary for the in vitro assembly process of the 50S ribosomal subunit. It is not involved in the protein synthesizing functions of that subunit. This Ralstonia pickettii (strain 12J) protein is Large ribosomal subunit protein bL20.